We begin with the raw amino-acid sequence, 168 residues long: 6,7-dimethyl-8-ribityllumazine synthase (168 aa).

Residues Trp-31, 65 to 67 (SFE), and 89 to 91 (CVV) each bind 5-amino-6-(D-ribitylamino)uracil. 94–95 (DT) contributes to the (2S)-2-hydroxy-3-oxobutyl phosphate binding site. His-97 serves as the catalytic Proton donor. Tyr-122 is a binding site for 5-amino-6-(D-ribitylamino)uracil. Arg-136 contributes to the (2S)-2-hydroxy-3-oxobutyl phosphate binding site.

The protein belongs to the DMRL synthase family.

The catalysed reaction is (2S)-2-hydroxy-3-oxobutyl phosphate + 5-amino-6-(D-ribitylamino)uracil = 6,7-dimethyl-8-(1-D-ribityl)lumazine + phosphate + 2 H2O + H(+). It participates in cofactor biosynthesis; riboflavin biosynthesis; riboflavin from 2-hydroxy-3-oxobutyl phosphate and 5-amino-6-(D-ribitylamino)uracil: step 1/2. Its function is as follows. Catalyzes the formation of 6,7-dimethyl-8-ribityllumazine by condensation of 5-amino-6-(D-ribitylamino)uracil with 3,4-dihydroxy-2-butanone 4-phosphate. This is the penultimate step in the biosynthesis of riboflavin. In Phocaeicola vulgatus (strain ATCC 8482 / DSM 1447 / JCM 5826 / CCUG 4940 / NBRC 14291 / NCTC 11154) (Bacteroides vulgatus), this protein is 6,7-dimethyl-8-ribityllumazine synthase.